We begin with the raw amino-acid sequence, 107 residues long: Small ribosomal subunit protein uS10c (107 aa).

It belongs to the universal ribosomal protein uS10 family. As to quaternary structure, part of the 30S ribosomal subunit.

The protein localises to the plastid. It is found in the chloroplast. Functionally, involved in the binding of tRNA to the ribosomes. This chain is Small ribosomal subunit protein uS10c, found in Phaeodactylum tricornutum (strain CCAP 1055/1).